Reading from the N-terminus, the 348-residue chain is Probable UDP-arabinopyranose mutase 5 (348 aa).

A DXD motif motif is present at residues 100-102; sequence DDD. Arg-148 carries N-linked (Glc...) arginine glycosylation.

Belongs to the RGP family. Heteromers with RGP1 and RGP2. The cofactor is Mn(2+). Mg(2+) is required as a cofactor. Post-translationally, reversibly glycosylated in vitro by UDP-glucose, UDP-xylose and UDP-galactose, but not UDP-mannose. In terms of tissue distribution, widely expressed at low levels.

The protein localises to the cytoplasm. It localises to the cytosol. Its subcellular location is the golgi apparatus. It carries out the reaction UDP-beta-L-arabinofuranose = UDP-beta-L-arabinopyranose. Functionally, probable UDP-L-arabinose mutase involved in the biosynthesis of cell wall non-cellulosic polysaccharides. The polypeptide is Probable UDP-arabinopyranose mutase 5 (Arabidopsis thaliana (Mouse-ear cress)).